The primary structure comprises 713 residues: Cyclomaltodextrin glucanotransferase (713 aa).

The signal sequence occupies residues 1 to 27 (MKKQVKWLTSVSMSVGIALGAALPVWA). The interval 28–165 (SPDTSVNNKL…NIKVVMDFAP (138 aa)) is A1. Asp54, Asn56, Asn59, Asn60, Gly78, and Asp80 together coordinate Ca(2+). A substrate-binding site is contributed by 127-128 (YW). Asn166 lines the Ca(2+) pocket. The interval 166–229 (NHTNPASSTD…NLYDLADINQ (64 aa)) is b. His167 provides a ligand contact to substrate. Ile217 contacts Ca(2+). Substrate is bound at residue 220-223 (NLYD). Position 226 (Asp226) interacts with Ca(2+). The tract at residues 230 to 434 (NNNTIDSYLK…LRKSNPALAY (205 aa)) is A2. Arg254 provides a ligand contact to substrate. The active-site Nucleophile is Asp256. A substrate-binding site is contributed by 259–260 (KH). A Ca(2+)-binding site is contributed by His260. Glu285 functions as the Proton donor in the catalytic mechanism. Positions 355, 399, and 403 each coordinate substrate. The interval 435-522 (GSTTQRWVNS…GTAVWQYTTT (88 aa)) is c. The interval 523–609 (ESSPIIGNVG…SAAFNNFNVL (87 aa)) is d. An IPT/TIG domain is found at 526–606 (PIIGNVGPTM…GTTSAAFNNF (81 aa)). The CBM20 domain maps to 608-713 (VLTADQVTVR…VATVTVDWQN (106 aa)). The interval 610–713 (TADQVTVRFK…VATVTVDWQN (104 aa)) is e.

Belongs to the glycosyl hydrolase 13 family. As to quaternary structure, monomer. It depends on Ca(2+) as a cofactor.

It localises to the secreted. The catalysed reaction is Cyclizes part of a (1-&gt;4)-alpha-D-glucan chain by formation of a (1-&gt;4)-alpha-D-glucosidic bond.. The chain is Cyclomaltodextrin glucanotransferase from Paenibacillus macerans (Bacillus macerans).